The sequence spans 313 residues: Ribosomal RNA small subunit methyltransferase H (313 aa).

Residues 35 to 37 (GGH), Asp-55, Phe-79, Asp-101, and Gln-108 contribute to the S-adenosyl-L-methionine site.

The protein belongs to the methyltransferase superfamily. RsmH family.

It is found in the cytoplasm. It catalyses the reaction cytidine(1402) in 16S rRNA + S-adenosyl-L-methionine = N(4)-methylcytidine(1402) in 16S rRNA + S-adenosyl-L-homocysteine + H(+). Specifically methylates the N4 position of cytidine in position 1402 (C1402) of 16S rRNA. In Escherichia coli O139:H28 (strain E24377A / ETEC), this protein is Ribosomal RNA small subunit methyltransferase H.